The following is a 61-amino-acid chain: Small ribosomal subunit protein uS14B (61 aa).

Zn(2+) is bound by residues C24, C27, C40, and C43.

The protein belongs to the universal ribosomal protein uS14 family. Zinc-binding uS14 subfamily. Part of the 30S ribosomal subunit. Contacts proteins S3 and S10. Zn(2+) is required as a cofactor.

In terms of biological role, binds 16S rRNA, required for the assembly of 30S particles and may also be responsible for determining the conformation of the 16S rRNA at the A site. This chain is Small ribosomal subunit protein uS14B, found in Shouchella clausii (strain KSM-K16) (Alkalihalobacillus clausii).